We begin with the raw amino-acid sequence, 346 residues long: Patr class I histocompatibility antigen, CH28 alpha chain (346 aa).

The signal sequence occupies residues 1–21; that stretch reads MAPRSLLLLFSGALALTETWA. Positions 22–111 are alpha-1; sequence GSHSLRYFST…LLRRYNQSEA (90 aa). Over 22 to 305 the chain is Extracellular; sequence GSHSLRYFST…EQSPQPTIPI (284 aa). The N-linked (GlcNAc...) asparagine glycan is linked to asparagine 107. Residues 112–203 form an alpha-2 region; that stretch reads GSHTLQGMNG…ENGKETLQRA (92 aa). 2 disulfides stabilise this stretch: cysteine 122-cysteine 185 and cysteine 224-cysteine 280. The segment at 204-295 is alpha-3; sequence DPPKAHIAHH…GLPQPLTLRW (92 aa). In terms of domain architecture, Ig-like C1-type spans 206 to 294; the sequence is PKAHIAHHPI…EGLPQPLTLR (89 aa). The interval 296–305 is connecting peptide; that stretch reads EQSPQPTIPI. A helical membrane pass occupies residues 306–329; the sequence is VGIVAGLVVLGAVVTGAVVAAVMW. Residues 330-346 are Cytoplasmic-facing; the sequence is RKKSSDRNRGSYSQAAV.

Belongs to the MHC class I family. Heterodimer of an alpha chain and a beta chain (beta-2-microglobulin).

Its subcellular location is the membrane. Functionally, involved in the presentation of foreign antigens to the immune system. This chain is Patr class I histocompatibility antigen, CH28 alpha chain, found in Pan troglodytes (Chimpanzee).